The following is an 86-amino-acid chain: Protein Tat (86 aa).

Residues 1–24 form an interaction with human CREBBP region; sequence MEPVDPRLEPWKHPGSQPKTACTN. Residues 1–48 are transactivation; the sequence is MEPVDPRLEPWKHPGSQPKTACTNCYCKKCCFHCQVCFITKALGISYG. Positions 22, 25, and 27 each coordinate Zn(2+). Residues 22-37 form a cysteine-rich region; the sequence is CTNCYCKKCCFHCQVC. Residue lysine 28 is modified to N6-acetyllysine; by host PCAF. Cysteine 30, histidine 33, cysteine 34, and cysteine 37 together coordinate Zn(2+). Residues 38–48 form a core region; it reads FITKALGISYG. Over residues 48–59 the composition is skewed to basic residues; it reads GRKKRRQRRRAH. The interval 48–86 is disordered; that stretch reads GRKKRRQRRRAHQNSQTHQASLSKQPTSQPRGDPTGPKE. Residues 49–57 carry the Nuclear localization signal, RNA-binding (TAR), and protein transduction motif; it reads RKKRRQRRR. Positions 49–86 are interaction with the host capping enzyme RNGTT; sequence RKKRRQRRRAHQNSQTHQASLSKQPTSQPRGDPTGPKE. N6-acetyllysine; by host EP300 and GCN5L2 is present on residues lysine 50 and lysine 51. Arginine 52 and arginine 53 each carry asymmetric dimethylarginine; by host PRMT6. The span at 60–77 shows a compositional bias: polar residues; that stretch reads QNSQTHQASLSKQPTSQP. Lysine 71 participates in a covalent cross-link: Glycyl lysine isopeptide (Lys-Gly) (interchain with G-Cter in ubiquitin). Positions 78–80 match the Cell attachment site motif; it reads RGD.

This sequence belongs to the lentiviruses Tat family. Interacts with host CCNT1. Associates with the P-TEFb complex composed at least of Tat, P-TEFb (CDK9 and CCNT1), TAR RNA, RNA Pol II. Recruits the HATs CREBBP, TAF1/TFIID, EP300, PCAF and GCN5L2. Interacts with host KAT5/Tip60; this interaction targets the latter to degradation. Interacts with the host deacetylase SIRT1. Interacts with host capping enzyme RNGTT; this interaction stimulates RNGTT. Binds to host KDR, and to the host integrins ITGAV/ITGB3 and ITGA5/ITGB1. Interacts with host KPNB1/importin beta-1 without previous binding to KPNA1/importin alpha-1. Interacts with EIF2AK2. Interacts with host nucleosome assembly protein NAP1L1; this interaction may be required for the transport of Tat within the nucleus, since the two proteins interact at the nuclear rim. Interacts with host C1QBP/SF2P32; this interaction involves lysine-acetylated Tat. Interacts with the host chemokine receptors CCR2, CCR3 and CXCR4. Interacts with host DPP4/CD26; this interaction may trigger an anti-proliferative effect. Interacts with host LDLR. Interacts with the host extracellular matrix metalloproteinase MMP1. Interacts with host PRMT6; this interaction mediates Tat's methylation. Interacts with, and is ubiquitinated by MDM2/Hdm2. Interacts with host PSMC3 and HTATIP2. Interacts with STAB1; this interaction may overcome SATB1-mediated repression of IL2 and IL2RA (interleukin) in T cells by binding to the same domain than HDAC1. Interacts (when acetylated) with human CDK13, thereby increasing HIV-1 mRNA splicing and promoting the production of the doubly spliced HIV-1 protein Nef. Interacts with host TBP; this interaction modulates the activity of transcriptional pre-initiation complex. Interacts with host RELA. Interacts with host PLSCR1; this interaction negatively regulates Tat transactivation activity by altering its subcellular distribution. Post-translationally, asymmetrical arginine methylation by host PRMT6 seems to diminish the transactivation capacity of Tat and affects the interaction with host CCNT1. In terms of processing, acetylation by EP300, CREBBP, GCN5L2/GCN5 and PCAF regulates the transactivation activity of Tat. EP300-mediated acetylation of Lys-50 promotes dissociation of Tat from the TAR RNA through the competitive binding to PCAF's bromodomain. In addition, the non-acetylated Tat's N-terminus can also interact with PCAF. PCAF-mediated acetylation of Lys-28 enhances Tat's binding to CCNT1. Lys-50 is deacetylated by SIRT1. Polyubiquitination by host MDM2 does not target Tat to degradation, but activates its transactivation function and fosters interaction with CCNT1 and TAR RNA. Post-translationally, phosphorylated by EIF2AK2 on serine and threonine residues adjacent to the basic region important for TAR RNA binding and function. Phosphorylation of Tat by EIF2AK2 is dependent on the prior activation of EIF2AK2 by dsRNA.

The protein localises to the host nucleus. Its subcellular location is the host nucleolus. The protein resides in the host cytoplasm. It is found in the secreted. In terms of biological role, transcriptional activator that increases RNA Pol II processivity, thereby increasing the level of full-length viral transcripts. Recognizes a hairpin structure at the 5'-LTR of the nascent viral mRNAs referred to as the transactivation responsive RNA element (TAR) and recruits the cyclin T1-CDK9 complex (P-TEFb complex) that will in turn hyperphosphorylate the RNA polymerase II to allow efficient elongation. The CDK9 component of P-TEFb and other Tat-activated kinases hyperphosphorylate the C-terminus of RNA Pol II that becomes stabilized and much more processive. Other factors such as HTATSF1/Tat-SF1, SUPT5H/SPT5, and HTATIP2 are also important for Tat's function. Besides its effect on RNA Pol II processivity, Tat induces chromatin remodeling of proviral genes by recruiting the histone acetyltransferases (HATs) CREBBP, EP300 and PCAF to the chromatin. This also contributes to the increase in proviral transcription rate, especially when the provirus integrates in transcriptionally silent region of the host genome. To ensure maximal activation of the LTR, Tat mediates nuclear translocation of NF-kappa-B by interacting with host RELA. Through its interaction with host TBP, Tat may also modulate transcription initiation. Tat can reactivate a latently infected cell by penetrating in it and transactivating its LTR promoter. In the cytoplasm, Tat is thought to act as a translational activator of HIV-1 mRNAs. Functionally, extracellular circulating Tat can be endocytosed by surrounding uninfected cells via the binding to several surface receptors such as CD26, CXCR4, heparan sulfate proteoglycans (HSPG) or LDLR. Neurons are rarely infected, but they internalize Tat via their LDLR. Through its interaction with nuclear HATs, Tat is potentially able to control the acetylation-dependent cellular gene expression. Modulates the expression of many cellular genes involved in cell survival, proliferation or in coding for cytokines or cytokine receptors. Tat plays a role in T-cell and neurons apoptosis. Tat induced neurotoxicity and apoptosis probably contribute to neuroAIDS. Circulating Tat also acts as a chemokine-like and/or growth factor-like molecule that binds to specific receptors on the surface of the cells, affecting many cellular pathways. In the vascular system, Tat binds to ITGAV/ITGB3 and ITGA5/ITGB1 integrins dimers at the surface of endothelial cells and competes with bFGF for heparin-binding sites, leading to an excess of soluble bFGF. This Homo sapiens (Human) protein is Protein Tat.